Reading from the N-terminus, the 504-residue chain is Sphingosine-1-phosphate transporter SPNS2 (504 aa).

Transmembrane regions (helical) follow at residues 48-70 (LLRC…LNYM), 94-114 (GLLQ…FGYL), 122-142 (IILS…SFIT), 182-202 (VMLS…YILG), 214-234 (WALR…LIFV), 269-289 (VFSS…GIWI), 317-337 (LIFG…GAVT), 351-371 (LVCA…FVVA), 375-395 (IVGA…NWAI), 415-435 (FQGF…IGLI), and 460-480 (LCPF…LFFL).

Belongs to the major facilitator superfamily. Spinster (TC 2.A.1.49) family.

It is found in the cell membrane. The protein localises to the endosome membrane. It catalyses the reaction sphing-4-enine 1-phosphate(in) = sphing-4-enine 1-phosphate(out). The enzyme catalyses sphinganine 1-phosphate(in) = sphinganine 1-phosphate(out). Its function is as follows. Lipid transporter that specifically mediates export of sphingosine-1-phosphate (sphing-4-enine 1-phosphate, S1P) and sphinganine-1-phosphate, which play critical roles in regulating heart development. Mediates the export of S1P from cells in the extraembryonic yolk syncytial layer (YSL), thereby regulating myocardial precursor migration. The sequence is that of Sphingosine-1-phosphate transporter SPNS2 from Danio rerio (Zebrafish).